The following is a 138-amino-acid chain: UPF0201 protein PH1010 (138 aa).

It belongs to the UPF0201 family.

This is UPF0201 protein PH1010 from Pyrococcus horikoshii (strain ATCC 700860 / DSM 12428 / JCM 9974 / NBRC 100139 / OT-3).